Here is a 147-residue protein sequence, read N- to C-terminus: Transcriptional repressor NrdR (147 aa).

A zinc finger lies at 3–34 (CPFCGHLETQVVETRVSEDADFVRRRRQCSAC). In terms of domain architecture, ATP-cone spans 49-139 (PVVVKKDGSR…VYRSFEDVDE (91 aa)).

It belongs to the NrdR family. The cofactor is Zn(2+).

Its function is as follows. Negatively regulates transcription of bacterial ribonucleotide reductase nrd genes and operons by binding to NrdR-boxes. The polypeptide is Transcriptional repressor NrdR (Variovorax paradoxus (strain S110)).